Consider the following 246-residue polypeptide: Phosphomannomutase 2 (246 aa).

Ala2 carries the post-translational modification N-acetylalanine. The active-site Nucleophile is the Asp12. Residues Asp12 and Asp14 each coordinate Mg(2+). Residue Asp14 is the Proton donor/acceptor of the active site. Positions 21, 123, 134, and 141 each coordinate alpha-D-mannose 1-phosphate. N6-acetyllysine is present on Lys149. The alpha-D-mannose 1-phosphate site is built by Ser179 and Asp181. Mg(2+)-binding residues include Asp209, Phe221, Asp223, and Thr226.

It belongs to the eukaryotic PMM family. In terms of assembly, homodimer.

It localises to the cytoplasm. The enzyme catalyses alpha-D-mannose 1-phosphate = D-mannose 6-phosphate. It participates in nucleotide-sugar biosynthesis; GDP-alpha-D-mannose biosynthesis; alpha-D-mannose 1-phosphate from D-fructose 6-phosphate: step 2/2. Involved in the synthesis of the GDP-mannose and dolichol-phosphate-mannose required for a number of critical mannosyl transfer reactions. The sequence is that of Phosphomannomutase 2 (PMM2) from Macaca fascicularis (Crab-eating macaque).